The primary structure comprises 482 residues: [Fructose-bisphosphate aldolase]-lysine N-methyltransferase, chloroplastic (482 aa).

A chloroplast-targeting transit peptide spans 1 to 57 (MSASVAVVSGFLRIPSIQKSQNPSFLFSRPKKSLVRPISASSSELPENVRNFWKWLR). Positions 59–282 (QGVVSGKSVA…AGEQVYIQYD (224 aa)) constitute an SET domain. Residues 75–77 (EGL) and arginine 217 contribute to the S-adenosyl-L-methionine site. Substrate contacts are provided by arginine 217, arginine 221, and aspartate 234. Residue 237 to 238 (NH) participates in S-adenosyl-L-methionine binding. Residues tyrosine 249, tyrosine 281, and tyrosine 294 each contribute to the substrate site.

This sequence belongs to the class V-like SAM-binding methyltransferase superfamily. Plant protein-lysine LSMT methyltransferase family.

The protein resides in the plastid. It is found in the chloroplast stroma. It catalyses the reaction [fructose-bisphosphate aldolase]-L-lysine + 3 S-adenosyl-L-methionine = [fructose-bisphosphate aldolase]-N(6),N(6),N(6)-trimethyl-L-lysine + 3 S-adenosyl-L-homocysteine + 3 H(+). In terms of biological role, protein-lysine methyltransferase methylating chloroplastic fructose 1,6-bisphosphate aldolases. Can also use with low efficiency gamma-tocopherol methyltransferase as substrate, but not a cytosolic aldolase. Able to interact with unmethylated Rubisco, but unlike in pea, the complex is catalytically unproductive. The sequence is that of [Fructose-bisphosphate aldolase]-lysine N-methyltransferase, chloroplastic (LSMT-L) from Arabidopsis thaliana (Mouse-ear cress).